We begin with the raw amino-acid sequence, 203 residues long: Probable GTP-binding protein EngB (203 aa).

One can recognise an EngB-type G domain in the interval 24–199 (DGSEVAFAGR…HTVIETWLGL (176 aa)). GTP-binding positions include 32-39 (GRSNAGKS), 59-63 (GRTQQ), 77-80 (DLPG), 144-147 (TKAD), and 178-180 (FSS). Positions 39 and 61 each coordinate Mg(2+).

Belongs to the TRAFAC class TrmE-Era-EngA-EngB-Septin-like GTPase superfamily. EngB GTPase family. Mg(2+) serves as cofactor.

In terms of biological role, necessary for normal cell division and for the maintenance of normal septation. This is Probable GTP-binding protein EngB from Xylella fastidiosa (strain 9a5c).